The primary structure comprises 211 residues: Regulator of G-protein signaling 2 (211 aa).

A necessary for membrane association region spans residues 32–66 (KMKRTLLKDWKTRLSYFLQNSSTPGKPKTGKKSKQ). A necessary to inhibit protein synthesis region spans residues 79 to 116 (LWAEAFDELLASKYGLAAFRAFLKSEFCEENIEFWLAC). Residues 83-199 (AFDELLASKY…LESEFYQDLC (117 aa)) form the RGS domain.

Interacts with GNAQ. Does not interact with GNAI1 and GNAI3. Interacts with EIF2B5. Interacts with PRKG1 (isoform alpha). Phosphorylated by protein kinase C. Phosphorylation by PRKG1 leads to activation of RGS2 activity.

Its subcellular location is the cell membrane. The protein resides in the cytoplasm. It is found in the nucleus. The protein localises to the nucleolus. Functionally, regulates G protein-coupled receptor signaling cascades. Inhibits signal transduction by increasing the GTPase activity of G protein alpha subunits, thereby driving them into their inactive GDP-bound form. It is involved in the negative regulation of the angiotensin-activated signaling pathway. Plays a role in the regulation of blood pressure in response to signaling via G protein-coupled receptors and GNAQ. Plays a role in regulating the constriction and relaxation of vascular smooth muscle. Binds EIF2B5 and blocks its activity, thereby inhibiting the translation of mRNA into protein. In Rattus norvegicus (Rat), this protein is Regulator of G-protein signaling 2 (Rgs2).